Here is a 182-residue protein sequence, read N- to C-terminus: UPF0398 protein RBAM_020340 (182 aa).

The protein belongs to the UPF0398 family.

This chain is UPF0398 protein RBAM_020340, found in Bacillus velezensis (strain DSM 23117 / BGSC 10A6 / LMG 26770 / FZB42) (Bacillus amyloliquefaciens subsp. plantarum).